The primary structure comprises 548 residues: Splicing factor U2af large subunit B (548 aa).

A compositionally biased stretch (basic and acidic residues) spans 1–82; sequence MADDHAAAAD…DRDRDRDKDR (82 aa). Residues 1-156 are disordered; the sequence is MADDHAAAAD…SKRVSGFDMA (156 aa). The segment covering 83–93 has biased composition (basic residues); the sequence is DRHHRHHRERR. Positions 94-120 are enriched in basic and acidic residues; the sequence is EHRDRSDDHDRHRSRDSERRRDHERDG. Basic residues predominate over residues 121 to 149; that stretch reads RRRHRSRSRSRSRGRDRRSRSRSRSKSKR. RRM domains are found at residues 214–297, 334–412, and 453–539; these read RRVY…RPTD, DRIF…RANQ, and QVVS…YPEN.

It belongs to the splicing factor SR family.

It localises to the nucleus. In terms of biological role, necessary for the splicing of pre-mRNA. In Oryza sativa subsp. japonica (Rice), this protein is Splicing factor U2af large subunit B (U2AF65B).